Consider the following 390-residue polypeptide: Coiled-coil domain-containing protein 85C (390 aa).

2 coiled-coil regions span residues 26–86 and 116–146; these read KEEL…RELC and KEVGTYQQKLKELEAKQESLVRDNLELKEII. The tract at residues 153–237 is disordered; the sequence is RNGPGSRSSI…RSIPNGLNDS (85 aa). Positions 157 to 172 are enriched in polar residues; sequence GSRSSIDSQNSLTNLN. The span at 182–194 shows a compositional bias: low complexity; the sequence is DGSSTSSTGSAGS.

Belongs to the CCDC85 family.

The protein resides in the cell junction. The protein localises to the tight junction. It localises to the adherens junction. In terms of biological role, may play a role in cell-cell adhesion and epithelium development. May play an important role in cortical development, especially in the maintenance of radial glia. The chain is Coiled-coil domain-containing protein 85C (ccdc85c) from Xenopus laevis (African clawed frog).